Consider the following 705-residue polypeptide: Solute carrier family 28 member 3 (705 aa).

Residues 1–21 (MSRSDPDPGKNSEPSKSKMSL) are compositionally biased toward basic and acidic residues. Positions 1 to 96 (MSRSDPDPGK…TEEESEDERQ (96 aa)) are disordered. At 1-119 (MSRSDPDPGK…FCRKHRVILQ (119 aa)) the chain is on the cytoplasmic side. Positions 48–63 (APGNSTVRSRVVQSGE) are enriched in polar residues. A compositionally biased stretch (basic and acidic residues) spans 65–74 (GRAKQDDRQI). Residues 120–140 (HTIWAVLLTGFLALVIAACAL) form a helical membrane-spanning segment. Residues 141 to 145 (NFHRA) lie on the Extracellular side of the membrane. The helical transmembrane segment at 146-166 (LPLFVITLVTIFFVVWDRLMA) threads the bilayer. Residues 167–190 (KYEQRIDDVLSPGKRLLERHWFWL) are Cytoplasmic-facing. The chain crosses the membrane as a helical span at residues 191 to 211 (KWVVWCSLILAVILWLALDTA). Over 212–214 (RLG) the chain is Extracellular. The chain crosses the membrane as a helical span at residues 215-236 (QQQLISFGGLVMYIVLLFLFSK). Residues 237 to 244 (HPTRVYWR) are Cytoplasmic-facing. Residues 245–264 (PVFWGIGLQFLLGLLILRTR) form a helical membrane-spanning segment. At 265-301 (PGFVAFDWMGKQVQTFLGYTDAGAQFVFGEKYTDHFF) the chain is on the extracellular side. Residues 302-322 (AFKILPIVVFFSTVMSMLYYL) traverse the membrane as a helical segment. The Cytoplasmic portion of the chain corresponds to 323–346 (GLMQWIIRKVGWLMLVTMGSSPIE). The segment at residues 347–365 (SVVAAGNIFVGQTESPLLV) is an intramembrane region (helical). Topologically, residues 366–378 (QPYLPHVTKSELH) are cytoplasmic. Residues 379–401 (TIMTAGFATIAGSVLGAYISFGV) traverse the membrane as a helical segment. Residues 402-403 (SS) lie on the Extracellular side of the membrane. The chain crosses the membrane as a helical span at residues 404-425 (THLLTASVMSAPAALAVAKLFW). The Cytoplasmic segment spans residues 426–460 (PETEKPKITLKNAMKMENGDSRNLLEAATQGASSS). The chain crosses the membrane as a helical span at residues 461–486 (IPLVANIAANLIAFLALLSFVNSALS). The Extracellular segment spans residues 487-524 (WFGSMFDYPQLSFELICSYIFMPFSFMMGVDWQDRFMV). Residues 525–544 (AKLIGYKTFFNEFVAYEHLS) constitute an intramembrane region (helical). The Extracellular portion of the chain corresponds to 545–583 (KFINLRKAAGPKFVNGVQQYMSIRSETIATYALCGFANF). Residues 584-594 (GSLGIVIGGLT) form a helical membrane-spanning segment. Over 595–607 (SIAPSRKRDIASG) the chain is Cytoplasmic. A helical membrane pass occupies residues 608–630 (AMRALIAGTIACFMTACIAGMLS). Topologically, residues 631–705 (DTPVAINCHH…LNCGWIPNIP (75 aa)) are extracellular.

It belongs to the concentrative nucleoside transporter (CNT) (TC 2.A.41) family. Homotrimer. Expressed in kidney; in the proximal tubule, glomerulus and cortical collecting duct.

Its subcellular location is the cell membrane. The enzyme catalyses thymidine(out) + 2 Na(+)(out) = thymidine(in) + 2 Na(+)(in). It carries out the reaction cytidine(out) + 2 Na(+)(out) = cytidine(in) + 2 Na(+)(in). The catalysed reaction is uridine(out) + 2 Na(+)(out) = uridine(in) + 2 Na(+)(in). It catalyses the reaction adenosine(out) + 2 Na(+)(out) = adenosine(in) + 2 Na(+)(in). The enzyme catalyses guanosine(out) + 2 Na(+)(out) = guanosine(in) + 2 Na(+)(in). It carries out the reaction inosine(out) + 2 Na(+)(out) = inosine(in) + 2 Na(+)(in). Its function is as follows. Sodium-dependent, pyrimidine- and purine-selective. Involved in the homeostasis of endogenous nucleosides. Exhibits the transport characteristics of the nucleoside transport system cib or N3 subtype (N3/cib) (with marked transport of both thymidine and inosine). Employs a 2:1 sodium/nucleoside ratio. Also able to transport gemcitabine, 3'-azido-3'-deoxythymidine (AZT), ribavirin and 3-deazauridine. The sequence is that of Solute carrier family 28 member 3 (Slc28a3) from Rattus norvegicus (Rat).